The following is a 48-amino-acid chain: Phospholipase A2 superbin d (48 aa).

Ca(2+) is bound by residues tyrosine 28, glycine 30, and glycine 32. A disulfide bridge links cysteine 29 with cysteine 45. Histidine 48 is an active-site residue.

Requires Ca(2+) as cofactor. Expressed by the venom gland.

The protein localises to the secreted. The catalysed reaction is a 1,2-diacyl-sn-glycero-3-phosphocholine + H2O = a 1-acyl-sn-glycero-3-phosphocholine + a fatty acid + H(+). In terms of biological role, snake venom phospholipase A2 (PLA2) that inhibits collagen-induced platelet aggregation. In terms of inhibition of platelet aggregation, superbin d is less potent as superbin a, b, and c. PLA2 catalyzes the calcium-dependent hydrolysis of the 2-acyl groups in 3-sn-phosphoglycerides. This is Phospholipase A2 superbin d from Austrelaps superbus (Lowland copperhead snake).